The sequence spans 118 residues: Ribonuclease P protein component (118 aa).

The protein belongs to the RnpA family. As to quaternary structure, consists of a catalytic RNA component (M1 or rnpB) and a protein subunit.

The catalysed reaction is Endonucleolytic cleavage of RNA, removing 5'-extranucleotides from tRNA precursor.. In terms of biological role, RNaseP catalyzes the removal of the 5'-leader sequence from pre-tRNA to produce the mature 5'-terminus. It can also cleave other RNA substrates such as 4.5S RNA. The protein component plays an auxiliary but essential role in vivo by binding to the 5'-leader sequence and broadening the substrate specificity of the ribozyme. The chain is Ribonuclease P protein component from Ureaplasma urealyticum serovar 10 (strain ATCC 33699 / Western).